An 820-amino-acid polypeptide reads, in one-letter code: Serine/threonine-protein phosphatase 4 regulatory subunit 3-B (820 aa).

In terms of domain architecture, WH1 spans 1–100 (MSDTRRRVKV…DEIWEKICQV (100 aa)). A compositionally biased stretch (acidic residues) spans 682–694 (ELWFNEDDEEEGE). Disordered regions lie at residues 682 to 711 (ELWFNEDDEEEGEAVVPPVEKTKPEDDFPE) and 750 to 820 (AANG…RLGS). Residues 701 to 711 (EKTKPEDDFPE) are compositionally biased toward basic and acidic residues. 2 stretches are compositionally biased toward polar residues: residues 750–761 (AANGANSTNSKS) and 768–790 (PATSNGSSSKNTSLTTTVASTKG). Residues 798 to 809 (YPDDEDEEEEED) show a composition bias toward acidic residues.

This sequence belongs to the SMEK family. Serine/threonine-protein phosphatase 4 (PP4) occurs in different assemblies of the catalytic and one or more regulatory subunits.

Functionally, regulatory subunit of serine/threonine-protein phosphatase 4 (PP4). This Xenopus laevis (African clawed frog) protein is Serine/threonine-protein phosphatase 4 regulatory subunit 3-B.